The sequence spans 484 residues: Cobyric acid synthase (484 aa).

The GATase cobBQ-type domain maps to 249–438 (QLRVAVPVFT…LHGIFDRPET (190 aa)). Catalysis depends on Cys330, which acts as the Nucleophile. The active site involves His430.

The protein belongs to the CobB/CobQ family. CobQ subfamily.

It participates in cofactor biosynthesis; adenosylcobalamin biosynthesis. Catalyzes amidations at positions B, D, E, and G on adenosylcobyrinic A,C-diamide. NH(2) groups are provided by glutamine, and one molecule of ATP is hydrogenolyzed for each amidation. This chain is Cobyric acid synthase, found in Vibrio cholerae serotype O1 (strain ATCC 39315 / El Tor Inaba N16961).